Here is a 293-residue protein sequence, read N- to C-terminus: Succinate--CoA ligase [ADP-forming] subunit alpha (293 aa).

CoA is bound by residues 21 to 24 (TGKQ), Lys-47, and 99 to 101 (ITE). Residue Tyr-162 participates in substrate binding. Residue His-249 is the Tele-phosphohistidine intermediate of the active site.

It belongs to the succinate/malate CoA ligase alpha subunit family. In terms of assembly, heterotetramer of two alpha and two beta subunits.

The enzyme catalyses succinate + ATP + CoA = succinyl-CoA + ADP + phosphate. The catalysed reaction is GTP + succinate + CoA = succinyl-CoA + GDP + phosphate. Its pathway is carbohydrate metabolism; tricarboxylic acid cycle; succinate from succinyl-CoA (ligase route): step 1/1. In terms of biological role, succinyl-CoA synthetase functions in the citric acid cycle (TCA), coupling the hydrolysis of succinyl-CoA to the synthesis of either ATP or GTP and thus represents the only step of substrate-level phosphorylation in the TCA. The alpha subunit of the enzyme binds the substrates coenzyme A and phosphate, while succinate binding and nucleotide specificity is provided by the beta subunit. The sequence is that of Succinate--CoA ligase [ADP-forming] subunit alpha from Methanothermobacter thermautotrophicus (strain ATCC 29096 / DSM 1053 / JCM 10044 / NBRC 100330 / Delta H) (Methanobacterium thermoautotrophicum).